Consider the following 376-residue polypeptide: Succinyl-diaminopimelate desuccinylase (376 aa).

Residue His-67 coordinates Zn(2+). Asp-69 is a catalytic residue. Position 100 (Asp-100) interacts with Zn(2+). The active-site Proton acceptor is the Glu-134. Zn(2+) contacts are provided by Glu-135, Glu-163, and His-349.

This sequence belongs to the peptidase M20A family. DapE subfamily. In terms of assembly, homodimer. The cofactor is Zn(2+). Requires Co(2+) as cofactor.

It catalyses the reaction N-succinyl-(2S,6S)-2,6-diaminopimelate + H2O = (2S,6S)-2,6-diaminopimelate + succinate. It participates in amino-acid biosynthesis; L-lysine biosynthesis via DAP pathway; LL-2,6-diaminopimelate from (S)-tetrahydrodipicolinate (succinylase route): step 3/3. Catalyzes the hydrolysis of N-succinyl-L,L-diaminopimelic acid (SDAP), forming succinate and LL-2,6-diaminopimelate (DAP), an intermediate involved in the bacterial biosynthesis of lysine and meso-diaminopimelic acid, an essential component of bacterial cell walls. The sequence is that of Succinyl-diaminopimelate desuccinylase from Pseudoalteromonas atlantica (strain T6c / ATCC BAA-1087).